A 337-amino-acid polypeptide reads, in one-letter code: tRNA N6-adenosine threonylcarbamoyltransferase (337 aa).

Fe cation contacts are provided by histidine 111 and histidine 115. Substrate-binding positions include 134 to 138 (LVSGG), aspartate 167, glycine 180, and asparagine 272. A Fe cation-binding site is contributed by aspartate 300.

It belongs to the KAE1 / TsaD family. Fe(2+) is required as a cofactor.

Its subcellular location is the cytoplasm. It catalyses the reaction L-threonylcarbamoyladenylate + adenosine(37) in tRNA = N(6)-L-threonylcarbamoyladenosine(37) in tRNA + AMP + H(+). Required for the formation of a threonylcarbamoyl group on adenosine at position 37 (t(6)A37) in tRNAs that read codons beginning with adenine. Is involved in the transfer of the threonylcarbamoyl moiety of threonylcarbamoyl-AMP (TC-AMP) to the N6 group of A37, together with TsaE and TsaB. TsaD likely plays a direct catalytic role in this reaction. This chain is tRNA N6-adenosine threonylcarbamoyltransferase, found in Shewanella amazonensis (strain ATCC BAA-1098 / SB2B).